Consider the following 457-residue polypeptide: Neuropeptide receptor npr-1 (457 aa).

Residues 1-22 (MEVENFTDCQVYWKVYPDPSQS) lie on the Extracellular side of the membrane. The helical transmembrane segment at 23–43 (IYAIVPFLTVYLFLFFLGLFG) threads the bilayer. Residues 44–62 (NVTLIYVTCSHKALLSVQN) lie on the Cytoplasmic side of the membrane. The helical transmembrane segment at 63–83 (IFILNLAASDCMMCILSLPIT) threads the bilayer. Residues 84–100 (PITNVYKNWYFGNLLCH) are Extracellular-facing. The cysteines at positions 99 and 178 are disulfide-linked. Residues 101–121 (LIPCIQGISIFVCTFSLGAIA) form a helical membrane-spanning segment. Over 122–140 (LDRYILVVRPHSTPLSQRG) the chain is Cytoplasmic. A helical transmembrane segment spans residues 141 to 161 (AFLTTVLLWILSFVVTLPYAF). Residues 162–193 (NMQMIEYTEERICGYFCTEKWESAKSRRAYTM) are Extracellular-facing. Residues 194–214 (IVMLAQFVVPFAVMAFCYANI) traverse the membrane as a helical segment. The Cytoplasmic segment spans residues 215–279 (VSVLSKRAQT…LQNRRTTSIL (65 aa)). Residues 280–300 (VTMVVWFGITWLPHNVISLII) traverse the membrane as a helical segment. Topologically, residues 301-324 (EYDDTQSFFRLYGRDDYDISYLLN) are extracellular. The helical transmembrane segment at 325 to 345 (LFTHSIAMSNNVLNPVLYAWL) threads the bilayer. At 346 to 457 (NPSFRQLVIK…IEFSVNDTLV (112 aa)) the chain is on the cytoplasmic side.

The protein belongs to the G-protein coupled receptor 1 family. In terms of tissue distribution, expressed in neurons, including neurons in the head, the ventral nerve cord, and the preanal ganglion.

The protein resides in the membrane. Functionally, G-protein coupled receptor for FARP(FMRFamide related peptide) neuropeptides. Activated by FARP neuropeptides flp-18 and flp-21. Plays a role in modulating social and feeding behavior. Required to modulate locomotion quiescence during the sleep-like state called lethargus, which occurs during molting between larval and adult stages, in part by regulating touch sensitivity. In Caenorhabditis elegans, this protein is Neuropeptide receptor npr-1.